The following is a 747-amino-acid chain: Myotubularin-related protein 12 (747 aa).

Residues 205 to 643 (FDTLKDWCWE…PEIKVWAQRY (439 aa)) enclose the Myotubularin phosphatase domain. The tract at residues 449 to 558 (VPVFLLFLDC…KGQRKGMRFK (110 aa)) is interaction with MTM1. 3 positions are modified to phosphoserine: Ser564, Ser601, and Ser716.

This sequence belongs to the protein-tyrosine phosphatase family. Non-receptor class myotubularin subfamily. Heterodimer with lipid phosphatase MTM1. Heterodimer with lipid phosphatase MTMR2. In terms of tissue distribution, expressed in skeletal muscles (at protein level). Ubiquitous with prominent expression in brain, heart, kidney, placenta, and lung.

Its subcellular location is the cytoplasm. It localises to the sarcoplasmic reticulum. It is found in the myofibril. The protein resides in the sarcomere. In terms of biological role, acts as an adapter for the myotubularin-related phosphatases. Regulates phosphatase MTM1 protein stability and possibly its intracellular location. By stabilizing MTM1 protein levels, required for skeletal muscle maintenance but not for myogenesis. This chain is Myotubularin-related protein 12 (MTMR12), found in Homo sapiens (Human).